Consider the following 468-residue polypeptide: Transmembrane protein 151A (468 aa).

Residues 1-20 form a disordered region; sequence MPEGEGGDCGEVPALVPDGE. The next 2 helical transmembrane spans lie at 45–65 and 98–118; these read CLLLTLLIHACGAVVAWCRLA and YLYIPLAFVSLLYLLYLAECW. The segment at 384-438 is disordered; sequence VSSNSLPPARPSGPRLPFSRSRLSLGAGGRTTPGVFRSLSGGPLGRRGEDTEPLE.

It belongs to the TMEM151 family. As to expression, highly expressed in the central nervous system (CNS) including the cerebral cortex, hippocampus, spinal cord, brainstem, and thalamus. Expression is relatively low during postnatal stages but highly expressed at postnatal day 14 (P14), and declined in adulthood. Also expressed in the stomach, heart, liver, spleen, lung, kidney, and muscle.

It localises to the endoplasmic reticulum membrane. The protein resides in the cell projection. It is found in the axon. The protein localises to the dendrite. The protein is Transmembrane protein 151A (Tmem151a) of Mus musculus (Mouse).